Reading from the N-terminus, the 164-residue chain is Putative glutamine amidotransferase-like protein RP713 (164 aa).

One can recognise a Glutamine amidotransferase type-1 domain in the interval 39–164; sequence TIANPNSLFM…VITVKIIIYM (126 aa).

The sequence is that of Putative glutamine amidotransferase-like protein RP713 from Rickettsia prowazekii (strain Madrid E).